The chain runs to 571 residues: 5' exonuclease Apollo (571 aa).

Disordered regions lie at residues 346 to 386 and 431 to 487; these read TSRP…TDRN and MDDN…SMHD. Basic and acidic residues-rich tracts occupy residues 367–386 and 453–468; these read NHDD…TDRN and ECDH…EKSP. The segment covering 470–487 has biased composition (polar residues); sequence MGSTNSGEMCSSMDSMHD. A TBM motif is present at residues 501 to 532; it reads NPQSVTSAIPITLESEQFEHWLLENFTIPAEE.

Belongs to the DNA repair metallo-beta-lactamase (DRMBL) family. As to quaternary structure, interacts with terf2; the interaction is direct.

Its subcellular location is the chromosome. It localises to the telomere. It is found in the nucleus. It carries out the reaction a beta-lactam + H2O = a substituted beta-amino acid. Its function is as follows. 5'-3' exonuclease that plays a central role in telomere maintenance and protection during S-phase. Participates in the protection of telomeres against non-homologous end-joining (NHEJ)-mediated repair, thereby ensuring that telomeres do not fuse. Plays a key role in telomeric loop (T loop) formation by being recruited by terf2 at the leading end telomeres and by processing leading-end telomeres immediately after their replication via its exonuclease activity: generates 3' single-stranded overhang at the leading end telomeres avoiding blunt leading-end telomeres that are vulnerable to end-joining reactions and expose the telomere end in a manner that activates the DNA repair pathways. Possesses beta-lactamase activity, catalyzing the hydrolysis of penicillin G and nitrocefin. Exhibits no activity towards other beta-lactam antibiotic classes including cephalosporins (cefotaxime) and carbapenems (imipenem). This is 5' exonuclease Apollo (dclre1b) from Danio rerio (Zebrafish).